We begin with the raw amino-acid sequence, 333 residues long: Cytosolic Fe-S cluster assembly factor NBP35 (333 aa).

[4Fe-4S] cluster contacts are provided by Cys-32, Cys-46, Cys-49, and Cys-55. 85–92 (GKGGVGKS) contacts ATP. The [4Fe-4S] cluster site is built by Cys-258 and Cys-261.

It belongs to the Mrp/NBP35 ATP-binding proteins family. NUBP1/NBP35 subfamily. Heterotetramer of 2 NBP35 and 2 CFD1 chains. Requires [4Fe-4S] cluster as cofactor.

It is found in the cytoplasm. The protein localises to the nucleus. Functionally, component of the cytosolic iron-sulfur (Fe/S) protein assembly (CIA) machinery. Required for maturation of extramitochondrial Fe-S proteins. The NBP35-CFD1 heterotetramer forms a Fe-S scaffold complex, mediating the de novo assembly of an Fe-S cluster and its transfer to target apoproteins. Required for biogenesis and export of both ribosomal subunits, which may reflect a role in assembly of the Fe/S clusters in RLI1, a protein which performs rRNA processing and ribosome export. The protein is Cytosolic Fe-S cluster assembly factor NBP35 of Eremothecium gossypii (strain ATCC 10895 / CBS 109.51 / FGSC 9923 / NRRL Y-1056) (Yeast).